The sequence spans 265 residues: 3-methyl-2-oxobutanoate hydroxymethyltransferase (265 aa).

Mg(2+) is bound by residues Asp-41 and Asp-80. 3-methyl-2-oxobutanoate-binding positions include 41-42, Asp-80, and Lys-110; that span reads DS. Glu-112 contacts Mg(2+). Glu-179 (proton acceptor) is an active-site residue.

This sequence belongs to the PanB family. As to quaternary structure, homodecamer; pentamer of dimers. Mg(2+) is required as a cofactor.

Its subcellular location is the cytoplasm. It catalyses the reaction 3-methyl-2-oxobutanoate + (6R)-5,10-methylene-5,6,7,8-tetrahydrofolate + H2O = 2-dehydropantoate + (6S)-5,6,7,8-tetrahydrofolate. Its pathway is cofactor biosynthesis; (R)-pantothenate biosynthesis; (R)-pantoate from 3-methyl-2-oxobutanoate: step 1/2. Its function is as follows. Catalyzes the reversible reaction in which hydroxymethyl group from 5,10-methylenetetrahydrofolate is transferred onto alpha-ketoisovalerate to form ketopantoate. The polypeptide is 3-methyl-2-oxobutanoate hydroxymethyltransferase (Pseudothermotoga lettingae (strain ATCC BAA-301 / DSM 14385 / NBRC 107922 / TMO) (Thermotoga lettingae)).